A 475-amino-acid polypeptide reads, in one-letter code: Pup--protein ligase (475 aa).

Glutamate 19 is a binding site for Mg(2+). Arginine 64 provides a ligand contact to ATP. Tyrosine 66 is a binding site for Mg(2+). The active-site Proton acceptor is the aspartate 68. Residue glutamate 74 coordinates Mg(2+). 2 residues coordinate ATP: threonine 77 and tryptophan 436.

It belongs to the Pup ligase/Pup deamidase family. Pup-conjugating enzyme subfamily.

It catalyses the reaction ATP + [prokaryotic ubiquitin-like protein]-L-glutamate + [protein]-L-lysine = ADP + phosphate + N(6)-([prokaryotic ubiquitin-like protein]-gamma-L-glutamyl)-[protein]-L-lysine.. It participates in protein degradation; proteasomal Pup-dependent pathway. Its pathway is protein modification; protein pupylation. Catalyzes the covalent attachment of the prokaryotic ubiquitin-like protein modifier Pup to the proteasomal substrate proteins, thereby targeting them for proteasomal degradation. This tagging system is termed pupylation. The ligation reaction involves the side-chain carboxylate of the C-terminal glutamate of Pup and the side-chain amino group of a substrate lysine. In Corynebacterium aurimucosum (strain ATCC 700975 / DSM 44827 / CIP 107346 / CN-1) (Corynebacterium nigricans), this protein is Pup--protein ligase.